The primary structure comprises 593 residues: Uroporphyrinogen-III C-methyltransferase (593 aa).

Residues 278–303 (ETSSSPNKKTKQETVTEGVVPPTDEN) form a disordered region.

Belongs to the precorrin methyltransferase family.

It carries out the reaction uroporphyrinogen III + 2 S-adenosyl-L-methionine = precorrin-2 + 2 S-adenosyl-L-homocysteine + H(+). Its function is as follows. Siroheme synthase involved in methionine biosynthesis. The protein is Uroporphyrinogen-III C-methyltransferase of Saccharomyces cerevisiae (strain ATCC 204508 / S288c) (Baker's yeast).